Here is a 420-residue protein sequence, read N- to C-terminus: L-rhamnose isomerase (420 aa).

His264, Asp296, and Asp298 together coordinate Mn(2+).

It belongs to the rhamnose isomerase family. Mn(2+) serves as cofactor.

It is found in the cytoplasm. It catalyses the reaction L-rhamnopyranose = L-rhamnulose. Its pathway is carbohydrate degradation; L-rhamnose degradation; glycerone phosphate from L-rhamnose: step 1/3. In terms of biological role, catalyzes the interconversion of L-rhamnose and L-rhamnulose. This chain is L-rhamnose isomerase, found in Listeria monocytogenes serotype 4b (strain F2365).